The chain runs to 131 residues: Universal stress protein C (131 aa).

The protein belongs to the universal stress protein A family.

It is found in the cytoplasm. In terms of biological role, required for resistance to DNA-damaging agents. This Salmonella typhi protein is Universal stress protein C (uspC).